The sequence spans 240 residues: Bactofilin BacP (240 aa).

The interval 116–240 (DVEPGRLPAE…KKVVVKKKTR (125 aa)) is interacts with PadC. The tract at residues 117–240 (VEPGRLPAER…KKVVVKKKTR (124 aa)) is disordered. The span at 126–150 (RPAVVRPTAVTRPTATPARPTIPAA) shows a compositional bias: low complexity. The span at 151-173 (RPMPPPPPSRPTPPPPPARPSAP) shows a compositional bias: pro residues. Residues 229 to 240 (AKKKVVVKKKTR) show a composition bias toward basic residues.

This sequence belongs to the bactofilin family. As to quaternary structure, interacts with BacN and probably also BacO, the 3 proteins colocalize as an extended structure. Interacts with PadC.

It localises to the cytoplasm. The protein localises to the cytoskeleton. In terms of biological role, a non-essential component of the chromosome segregation machinery. Positions the ParA-ParB-parS chromosome segregation machinery within the cell; BacP seems to be the most important bactofilin in this process. Forms a heteropolymeric, subpolar scaffold in the cell; BacP probably forms the core, BacO contributes to position and integrity while BacN does not seem to contribute to assembly. The chain is Bactofilin BacP from Myxococcus xanthus (strain DK1622).